We begin with the raw amino-acid sequence, 588 residues long: Adenine deaminase (588 aa).

It belongs to the metallo-dependent hydrolases superfamily. Adenine deaminase family. As to quaternary structure, homodimer. The cofactor is Mn(2+).

It catalyses the reaction adenine + H2O + H(+) = hypoxanthine + NH4(+). The polypeptide is Adenine deaminase (Escherichia coli O17:K52:H18 (strain UMN026 / ExPEC)).